We begin with the raw amino-acid sequence, 318 residues long: Receptor homology region, transmembrane domain- and RING domain-containing protein 6 (318 aa).

The first 20 residues, methionine 1–serine 20, serve as a signal peptide directing secretion. At valine 22–tryptophan 162 the chain is on the lumenal side. Residues cysteine 62 and cysteine 87 are joined by a disulfide bond. Residues glutamate 70 to tyrosine 143 enclose the PA domain. N-linked (GlcNAc...) asparagine glycosylation occurs at asparagine 121. A helical transmembrane segment spans residues serine 163 to phenylalanine 183. The Cytoplasmic segment spans residues serine 184–leucine 318. The RING-type; atypical zinc finger occupies cysteine 233–lysine 275.

It is found in the prevacuolar compartment membrane. The protein localises to the protein storage vacuole membrane. Its function is as follows. Involved in the trafficking of vacuolar proteins. May function as a sorting receptor for protein trafficking to the protein storage vacuole (PSV). The protein is Receptor homology region, transmembrane domain- and RING domain-containing protein 6 (RMR6) of Arabidopsis thaliana (Mouse-ear cress).